We begin with the raw amino-acid sequence, 181 residues long: Large ribosomal subunit protein uL5c (181 aa).

Belongs to the universal ribosomal protein uL5 family. Part of the 50S ribosomal subunit; contacts the 5S rRNA.

It localises to the plastid. Its subcellular location is the cyanelle. Functionally, binds 5S rRNA, forms part of the central protuberance of the 50S subunit. This chain is Large ribosomal subunit protein uL5c (rpl5), found in Cyanophora paradoxa.